Here is a 415-residue protein sequence, read N- to C-terminus: Queuine tRNA-ribosyltransferase accessory subunit 2 (415 aa).

4 residues coordinate Zn(2+): cysteine 351, cysteine 353, cysteine 356, and histidine 382.

It belongs to the queuine tRNA-ribosyltransferase family. QTRT2 subfamily. In terms of assembly, heterodimer of a catalytic subunit qtrt1 and an accessory subunit qtrt2. It depends on Zn(2+) as a cofactor.

The protein localises to the cytoplasm. It is found in the mitochondrion outer membrane. Functionally, non-catalytic subunit of the queuine tRNA-ribosyltransferase (TGT) that catalyzes the base-exchange of a guanine (G) residue with queuine (Q) at position 34 (anticodon wobble position) in tRNAs with GU(N) anticodons (tRNA-Asp, -Asn, -His and -Tyr), resulting in the hypermodified nucleoside queuosine (7-(((4,5-cis-dihydroxy-2-cyclopenten-1-yl)amino)methyl)-7-deazaguanosine). This chain is Queuine tRNA-ribosyltransferase accessory subunit 2, found in Xenopus laevis (African clawed frog).